The sequence spans 165 residues: Thiol peroxidase (165 aa).

A Thioredoxin domain is found at 18-164 (RKVGDKAPNF…YEAAIEAAKK (147 aa)). Cys60 acts as the Cysteine sulfenic acid (-SOH) intermediate in catalysis. A disulfide bridge connects residues Cys60 and Cys94.

The protein belongs to the peroxiredoxin family. Tpx subfamily. As to quaternary structure, homodimer.

It catalyses the reaction a hydroperoxide + [thioredoxin]-dithiol = an alcohol + [thioredoxin]-disulfide + H2O. In terms of biological role, thiol-specific peroxidase that catalyzes the reduction of hydrogen peroxide and organic hydroperoxides to water and alcohols, respectively. Plays a role in cell protection against oxidative stress by detoxifying peroxides. This is Thiol peroxidase from Listeria innocua serovar 6a (strain ATCC BAA-680 / CLIP 11262).